The chain runs to 175 residues: Adenine phosphoribosyltransferase (175 aa).

Belongs to the purine/pyrimidine phosphoribosyltransferase family. In terms of assembly, homodimer.

It is found in the cytoplasm. It catalyses the reaction AMP + diphosphate = 5-phospho-alpha-D-ribose 1-diphosphate + adenine. The protein operates within purine metabolism; AMP biosynthesis via salvage pathway; AMP from adenine: step 1/1. In terms of biological role, catalyzes a salvage reaction resulting in the formation of AMP, that is energically less costly than de novo synthesis. This Synechococcus sp. (strain JA-2-3B'a(2-13)) (Cyanobacteria bacterium Yellowstone B-Prime) protein is Adenine phosphoribosyltransferase.